Reading from the N-terminus, the 341-residue chain is NADH-quinone oxidoreductase subunit H (341 aa).

The next 8 membrane-spanning stretches (helical) occupy residues 16–36 (LLII…AVAY), 86–106 (VVFV…WAVI), 119–139 (VGVL…IMAG), 165–185 (IGFI…SDVV), 191–211 (MWFI…GLAE), 254–274 (GAMT…LGWL), 276–296 (IPGL…FLWV), and 315–335 (VFLP…TAFG).

Belongs to the complex I subunit 1 family. In terms of assembly, NDH-1 is composed of 14 different subunits. Subunits NuoA, H, J, K, L, M, N constitute the membrane sector of the complex.

It localises to the cell inner membrane. The enzyme catalyses a quinone + NADH + 5 H(+)(in) = a quinol + NAD(+) + 4 H(+)(out). In terms of biological role, NDH-1 shuttles electrons from NADH, via FMN and iron-sulfur (Fe-S) centers, to quinones in the respiratory chain. The immediate electron acceptor for the enzyme in this species is believed to be ubiquinone. Couples the redox reaction to proton translocation (for every two electrons transferred, four hydrogen ions are translocated across the cytoplasmic membrane), and thus conserves the redox energy in a proton gradient. This subunit may bind ubiquinone. This is NADH-quinone oxidoreductase subunit H from Paramagnetospirillum magneticum (strain ATCC 700264 / AMB-1) (Magnetospirillum magneticum).